Reading from the N-terminus, the 234-residue chain is Inosine triphosphate pyrophosphatase (234 aa).

11-16 (SGNKGK) is a binding site for ITP. Residue Glu40 coordinates Mg(2+). Residues Lys53, 81–82 (DT), Lys98, 176–179 (FGWD), Lys203, and 208–209 (HR) each bind ITP.

It belongs to the HAM1 NTPase family. Homodimer. The cofactor is Mg(2+). Mn(2+) serves as cofactor.

Its subcellular location is the cytoplasm. It catalyses the reaction ITP + H2O = IMP + diphosphate + H(+). The catalysed reaction is dITP + H2O = dIMP + diphosphate + H(+). It carries out the reaction XTP + H2O = XMP + diphosphate + H(+). Functionally, pyrophosphatase that hydrolyzes non-canonical purine nucleotides such as inosine triphosphate (ITP), deoxyinosine triphosphate (dITP) or xanthosine 5'-triphosphate (XTP) to their respective monophosphate derivatives. The enzyme does not distinguish between the deoxy- and ribose forms. Probably excludes non-canonical purines from RNA and DNA precursor pools, thus preventing their incorporation into RNA and DNA and avoiding chromosomal lesions. This Leishmania major protein is Inosine triphosphate pyrophosphatase.